The primary structure comprises 436 residues: MFESKINPLWQSFILAVQEEVKPALGCTEPISLALAAAAAAAELNGTVERIDAWVSPNLMKNGMGVTVPGTGMVGLPIAAALGALGGDAKAGLEVLKDASAKAVADAKAMLAAGHVAVMLQEPCNDILFSRAKVYSGDSWACVTIVGDHTNIVRIETDKGVVFTQADNAQEEEKTSPLGVLSHTSLEEILAFVNAVPFDAIRFILDAARLNGALSQEGLRGSWGLHIGSTLAKQCDRGLLAKDLSTAILIRTSAASDARMGGATLPAMSNSGSGNQGITATVPVMVVAEHVGADDERLARALMLSHLSAIYIHHQLPRLSALCAATTAAMGAAAGMAWLIDGRYDTIAMAISSMIGDVSGMICDGASNSCAMKVSTSASAAWKAVLMALDDTAVTGNEGIVAHNVEQSISNLCSLACRSMQQTDKQIIEIMASKAH.

It belongs to the UPF0597 family.

This chain is UPF0597 protein YhaM, found in Salmonella heidelberg (strain SL476).